Consider the following 224-residue polypeptide: UPF0173 metal-dependent hydrolase EAT1b_0495 (224 aa).

This sequence belongs to the UPF0173 family.

The chain is UPF0173 metal-dependent hydrolase EAT1b_0495 from Exiguobacterium sp. (strain ATCC BAA-1283 / AT1b).